A 375-amino-acid polypeptide reads, in one-letter code: Putative fimbrium tip subunit Fim1C (375 aa).

The first 16 residues, 1–16 (MKLLANIFLSGLAILA), serve as a signal peptide directing secretion. Cys17 carries the N-palmitoyl cysteine lipid modification. The S-diacylglycerol cysteine moiety is linked to residue Cys17. A propeptide spanning residues 17 to 47 (CVSCSKDEDPVLPLEGAKLSVAVKASGTATK) is cleaved from the precursor.

Belongs to the bacteroidetes fimbrillin superfamily. FimA/Mfa1 family. In terms of assembly, may be part of the fimbrial tip.

It localises to the fimbrium. The protein resides in the cell outer membrane. Probably a component of the fimbrium tip. Fimbriae are filamentous appendages on the cell surface that mediate cell adhesion and biofilm formation. In Parabacteroides distasonis (strain ATCC 8503 / DSM 20701 / CIP 104284 / JCM 5825 / NCTC 11152), this protein is Putative fimbrium tip subunit Fim1C.